A 296-amino-acid polypeptide reads, in one-letter code: MNGIALLIGLGPLLGWGLFPTIASKIGGKPVNQIIGTTFGTFIFALVYNLVQGIALPSGAALIWSIISGIGWASAQILTFHSFTLVGSSRAMPITTAFQLLGTSLWGVFALGDWPSTSDKLVGFLALALIILGAWMTTWSEHKTDENSAKLRKAVIILLVGEIGYWAYSAAPQAAKIDGSKAFLPQAIGMCLVAICYAVYLKVKEPSQRSALAQGVSYKQIISGFFFAFAALTYLISAQPNMNGLATGFILSQTSVVLATLTGIWFLHEKKTKKEMVVTLIGLAIIIGAATMTVIV.

Helical transmembrane passes span 2–24 (NGIALLIGLGPLLGWGLFPTIAS), 34–51 (IIGTTFGTFIFALVYNLV), 58–80 (SGAALIWSIISGIGWASAQILTF), 90–112 (RAMPITTAFQLLGTSLWGVFALG), 121–139 (LVGFLALALIILGAWMTTW), 182–201 (AFLPQAIGMCLVAICYAVYL), 221–240 (IISGFFFAFAALTYLISAQP), 245–267 (LATGFILSQTSVVLATLTGIWFL), and 276–295 (MVVTLIGLAIIIGAATMTVI).

This sequence belongs to the GRP transporter (TC 2.A.7.5) family.

It localises to the cell membrane. In terms of biological role, could be involved in the uptake of ribose. The sequence is that of Putative ribose uptake protein RbsU (rbsU) from Lactobacillus johnsonii (strain CNCM I-12250 / La1 / NCC 533).